Reading from the N-terminus, the 226-residue chain is uncharacterized protein (226 aa).

Residues 71-207 enclose the RNase H type-1 domain; it reads EPDDITVYFD…ADGLAKKILS (137 aa).

This is an uncharacterized protein from Bacillus subtilis (strain 168).